We begin with the raw amino-acid sequence, 204 residues long: Glycerol-3-phosphate acyltransferase (204 aa).

5 helical membrane-spanning segments follow: residues 8–28, 53–73, 81–101, 116–136, and 155–175; these read MLVF…CYIF, VPAI…VVLA, FITA…IFFG, FGFS…VAVI, and VIFT…IIIL.

It belongs to the PlsY family. In terms of assembly, probably interacts with PlsX.

It localises to the cell inner membrane. The enzyme catalyses an acyl phosphate + sn-glycerol 3-phosphate = a 1-acyl-sn-glycero-3-phosphate + phosphate. The protein operates within lipid metabolism; phospholipid metabolism. In terms of biological role, catalyzes the transfer of an acyl group from acyl-phosphate (acyl-PO(4)) to glycerol-3-phosphate (G3P) to form lysophosphatidic acid (LPA). This enzyme utilizes acyl-phosphate as fatty acyl donor, but not acyl-CoA or acyl-ACP. The protein is Glycerol-3-phosphate acyltransferase of Francisella philomiragia subsp. philomiragia (strain ATCC 25017 / CCUG 19701 / FSC 153 / O#319-036).